Consider the following 607-residue polypeptide: MSKIIGIDLGTTNSCVAVMEGGSATIIPNSEGARTTPSVVNIKDNGEVVVGEIAKRQAVTNPTSTVSSIKTHMGSDYKVEIFGKKYTPQEISAKTLQKLKKDAEAYLGEEVKEAVITVPAYFTDSQRQATKDAGTIAGLDVKRIINEPTAAALAYGLEKKKEEKVLVFDLGGGTFDVSVLEISDGVIEVISTAGNNHLGGDDFDNEIINWLVAEFKKETGIDLSNDKMAYQRLKDAAEKAKKELSTLMETSISLPFITMDATGPKHLEMKLTRAKFNDLTKHLVEATQGPTKTALKDASLEANQIDEILLVGGSTRIPAVQEWVENFFGKKPNKGINPDEVVAAGAAIQGGVLMGDVKDVLLLDVTPLSLGIETLGGVFTKMIEKNTTIPVKKSQVYSTAVDNQPAVTINVLQGERSRATDNHKLGEFNLEGIPAAPRGVPQIEVTFDIDANGIVHVSAKDLGTGKENKVTISGSSNLSKEEIERMTKEAEAHAEEDKKFQELVEARNKADQLISATEKTLKENPDKVSEEDKKNIEAAIEELKKVKDGDDKSAIDSAMEKLSQASHKFAEELYKEVQAQAQAQQQAGANAGSDKKDEDVAEAEVVD.

At Thr174 the chain carries Phosphothreonine; by autocatalysis. Residues 579–592 are compositionally biased toward low complexity; the sequence is AQAQAQQQAGANAG. The interval 579 to 607 is disordered; the sequence is AQAQAQQQAGANAGSDKKDEDVAEAEVVD.

This sequence belongs to the heat shock protein 70 family.

Acts as a chaperone. This Fusobacterium nucleatum subsp. nucleatum (strain ATCC 25586 / DSM 15643 / BCRC 10681 / CIP 101130 / JCM 8532 / KCTC 2640 / LMG 13131 / VPI 4355) protein is Chaperone protein DnaK.